Reading from the N-terminus, the 236-residue chain is 2,3,4,5-tetrahydropyridine-2,6-dicarboxylate N-acetyltransferase (236 aa).

This sequence belongs to the transferase hexapeptide repeat family. DapH subfamily.

It catalyses the reaction (S)-2,3,4,5-tetrahydrodipicolinate + acetyl-CoA + H2O = L-2-acetamido-6-oxoheptanedioate + CoA. The protein operates within amino-acid biosynthesis; L-lysine biosynthesis via DAP pathway; LL-2,6-diaminopimelate from (S)-tetrahydrodipicolinate (acetylase route): step 1/3. Its function is as follows. Catalyzes the transfer of an acetyl group from acetyl-CoA to tetrahydrodipicolinate. The sequence is that of 2,3,4,5-tetrahydropyridine-2,6-dicarboxylate N-acetyltransferase from Listeria innocua serovar 6a (strain ATCC BAA-680 / CLIP 11262).